The primary structure comprises 731 residues: 1,4-alpha-glucan branching enzyme GlgB 2 (731 aa).

The active-site Nucleophile is the aspartate 410. Residue glutamate 463 is the Proton donor of the active site.

The protein belongs to the glycosyl hydrolase 13 family. GlgB subfamily. Monomer.

The enzyme catalyses Transfers a segment of a (1-&gt;4)-alpha-D-glucan chain to a primary hydroxy group in a similar glucan chain.. The protein operates within glycan biosynthesis; glycogen biosynthesis. In terms of biological role, catalyzes the formation of the alpha-1,6-glucosidic linkages in glycogen by scission of a 1,4-alpha-linked oligosaccharide from growing alpha-1,4-glucan chains and the subsequent attachment of the oligosaccharide to the alpha-1,6 position. The sequence is that of 1,4-alpha-glucan branching enzyme GlgB 2 from Xanthomonas oryzae pv. oryzae (strain MAFF 311018).